The chain runs to 44 residues: Photosystem I reaction center subunit IX (44 aa).

The helical transmembrane segment at 7–27 threads the bilayer; the sequence is YLSTAPVLATLWFGSLAGLLI.

This sequence belongs to the PsaJ family.

It localises to the plastid. The protein resides in the chloroplast thylakoid membrane. In terms of biological role, may help in the organization of the PsaE and PsaF subunits. This is Photosystem I reaction center subunit IX from Cycas taitungensis (Prince sago).